The sequence spans 497 residues: Probable malate:quinone oxidoreductase (497 aa).

The protein belongs to the MQO family. Requires FAD as cofactor.

The catalysed reaction is (S)-malate + a quinone = a quinol + oxaloacetate. It functions in the pathway carbohydrate metabolism; tricarboxylic acid cycle; oxaloacetate from (S)-malate (quinone route): step 1/1. The polypeptide is Probable malate:quinone oxidoreductase (Rhodopseudomonas palustris (strain ATCC BAA-98 / CGA009)).